The chain runs to 210 residues: Glutathione S-transferase P (210 aa).

In terms of domain architecture, GST N-terminal spans 2 to 81; the sequence is PPYTIVYFPV…HLGRTLGLYG (80 aa). Y4 carries the phosphotyrosine; by EGFR modification. Residues Y8, R14, W39, K45, and 52 to 53 contribute to the glutathione site; that span reads QL. T62 carries the phosphothreonine modification. 65 to 66 is a glutathione binding site; the sequence is QS. In terms of domain architecture, GST C-terminal spans 83-204; sequence DQQEAALVDM…ASPEHMNRPI (122 aa). N6-succinyllysine occurs at positions 103 and 116. K128 is modified (N6-acetyllysine).

Belongs to the GST superfamily. Pi family. Homodimer. Interacts with CDK5.

The protein localises to the cytoplasm. It localises to the mitochondrion. The protein resides in the nucleus. The catalysed reaction is RX + glutathione = an S-substituted glutathione + a halide anion + H(+). It catalyses the reaction prostaglandin J2 + glutathione = prostaglandin J2-S-(R)-glutathione. The enzyme catalyses prostaglandin J2 + glutathione = prostaglandin J2-S-(S)-glutathione. It carries out the reaction prostaglandin A2 + glutathione = prostaglandin A2-S-(S)-glutathione. The catalysed reaction is 11(S)-hydroxy-14(S),15(S)-epoxy-(5Z,8Z,12E)-eicosatrienoate + glutathione = (11S,15S)-dihydroxy-14(R)-S-glutathionyl-(5Z,8Z,12E)-eicosatrienoate. Conjugation of reduced glutathione to a wide number of exogenous and endogenous hydrophobic electrophiles. Involved in the formation of glutathione conjugates of both prostaglandin A2 (PGA2) and prostaglandin J2 (PGJ2). Participates in the formation of novel hepoxilin regioisomers. Negatively regulates CDK5 activity via p25/p35 translocation to prevent neurodegeneration. The protein is Glutathione S-transferase P (GSTP1) of Bos taurus (Bovine).